The primary structure comprises 238 residues: Orotidine 5'-phosphate decarboxylase (238 aa).

Residues Asp-10, Lys-32, 59-68 (DLKLHDIPNT), Thr-122, Arg-184, Gln-193, Gly-213, and Arg-214 contribute to the substrate site. Residue Lys-61 is the Proton donor of the active site.

It belongs to the OMP decarboxylase family. Type 1 subfamily. As to quaternary structure, homodimer.

The enzyme catalyses orotidine 5'-phosphate + H(+) = UMP + CO2. It functions in the pathway pyrimidine metabolism; UMP biosynthesis via de novo pathway; UMP from orotate: step 2/2. Functionally, catalyzes the decarboxylation of orotidine 5'-monophosphate (OMP) to uridine 5'-monophosphate (UMP). In Bacillus mycoides (strain KBAB4) (Bacillus weihenstephanensis), this protein is Orotidine 5'-phosphate decarboxylase.